We begin with the raw amino-acid sequence, 755 residues long: Thermostable beta-glucosidase B (755 aa).

Asp-231 is a catalytic residue.

This sequence belongs to the glycosyl hydrolase 3 family.

The catalysed reaction is Hydrolysis of terminal, non-reducing beta-D-glucosyl residues with release of beta-D-glucose.. It participates in glycan metabolism; cellulose degradation. The chain is Thermostable beta-glucosidase B (bglB) from Acetivibrio thermocellus (strain ATCC 27405 / DSM 1237 / JCM 9322 / NBRC 103400 / NCIMB 10682 / NRRL B-4536 / VPI 7372) (Clostridium thermocellum).